The sequence spans 1286 residues: Lysine-specific demethylase JMJ705 (1286 aa).

Positions Ala25–Lys66 constitute a JmjN domain. A disordered region spans residues Pro82–Pro105. The region spanning Glu201 to Ala367 is the JmjC domain. Fe cation is bound by residues His244, Glu246, and His335. The segment covering Pro641–Ser679 has biased composition (polar residues). 3 disordered regions span residues Pro641–Arg686, Ala1013–Glu1060, and Pro1077–Ala1164. The segment covering His1119–Ser1136 has biased composition (polar residues). Residues Tyr1167–Ser1189 form a C2H2-type 1; degenerate zinc finger. C2H2-type zinc fingers lie at residues Asp1190–His1214, Leu1220–His1244, and Tyr1250–His1276.

The cofactor is Fe(2+). In terms of tissue distribution, expressed in leaves and flag leaves. Expressed at low levels in roots, shoots, stems and panicles.

Its subcellular location is the nucleus. It catalyses the reaction N(6),N(6),N(6)-trimethyl-L-lysyl(27)-[histone H3] + 2 2-oxoglutarate + 2 O2 = N(6)-methyl-L-lysyl(27)-[histone H3] + 2 formaldehyde + 2 succinate + 2 CO2. Functionally, histone demethylase that demethylates 'Lys-27' (H3K27me) of histone H3 with a specific activity for H3K27me3 and H3K27me2. No activity on H3K4me3, H3K9me3, H3K27me1 and H3K36me3. Involved in biotic stress response. May demethylate H3K27me3-marked defense-related genes and increase their basal and induced expression levels during pathogen infection. The protein is Lysine-specific demethylase JMJ705 (JMJ705) of Oryza sativa subsp. japonica (Rice).